Reading from the N-terminus, the 672-residue chain is Spermatid perinuclear RNA-binding protein (672 aa).

The region spanning 5 to 362 (RSFANDDRHV…ALKRPFEDGV (358 aa)) is the DZF domain. Positions 348-370 (GTGSSALKRPFEDGVGDDKDPNK) are disordered. Positions 356–370 (RPFEDGVGDDKDPNK) are enriched in basic and acidic residues. Residues 386 to 452 (DLMNALMRLN…AVKVLQAMGY (67 aa)) form the DRBM 1 domain. The disordered stretch occupies residues 463–494 (VSSDEKSDNEGKNETVSSISSNNTGNSTADTS). Over residues 465–475 (SDEKSDNEGKN) the composition is skewed to basic and acidic residues. A compositionally biased stretch (low complexity) spans 477–490 (TVSSISSNNTGNST). In terms of domain architecture, DRBM 2 spans 509 to 575 (SGKNPVMELN…ALAALEKLFS (67 aa)).

The protein localises to the cytoplasm. In terms of biological role, may be involved in normal spermatogenesis and sperm function. Binds to double-stranded DNA and RNA. This Gallus gallus (Chicken) protein is Spermatid perinuclear RNA-binding protein (STRBP).